Reading from the N-terminus, the 146-residue chain is Large ribosomal subunit protein bL21 (146 aa).

The disordered stretch occupies residues 103–146; it reads DGKSPTIGPRPKKEKAVEPVEGASDDKPRRAAKKTAAKTAEDAD. The span at 116-131 shows a compositional bias: basic and acidic residues; that stretch reads EKAVEPVEGASDDKPR.

This sequence belongs to the bacterial ribosomal protein bL21 family. As to quaternary structure, part of the 50S ribosomal subunit. Contacts protein L20.

This protein binds to 23S rRNA in the presence of protein L20. The sequence is that of Large ribosomal subunit protein bL21 from Nitrobacter winogradskyi (strain ATCC 25391 / DSM 10237 / CIP 104748 / NCIMB 11846 / Nb-255).